A 146-amino-acid polypeptide reads, in one-letter code: Anti-sigma F factor (146 aa).

It belongs to the anti-sigma-factor family.

The enzyme catalyses L-seryl-[protein] + ATP = O-phospho-L-seryl-[protein] + ADP + H(+). It carries out the reaction L-threonyl-[protein] + ATP = O-phospho-L-threonyl-[protein] + ADP + H(+). Functionally, binds to sigma F and blocks its ability to form an RNA polymerase holoenzyme (E-sigma F). Phosphorylates SpoIIAA on a serine residue. This phosphorylation may enable SpoIIAA to act as an anti-anti-sigma factor that counteracts SpoIIAB and thus releases sigma F from inhibition. The sequence is that of Anti-sigma F factor from Geobacillus stearothermophilus (Bacillus stearothermophilus).